A 478-amino-acid chain; its full sequence is tRNA (adenine(58)-N(1))-methyltransferase non-catalytic subunit TRM6 (478 aa).

Residues 456 to 478 (SENATAADSSEKLAEHGAKKQKI) are disordered. The span at 464 to 478 (SSEKLAEHGAKKQKI) shows a compositional bias: basic and acidic residues.

This sequence belongs to the TRM6/GCD10 family. As to quaternary structure, heterotetramer; composed of two copies of TRM6/GCD10 and two copies of TRM61/GCD14.

Its subcellular location is the nucleus. In terms of biological role, substrate-binding subunit of tRNA (adenine-N(1)-)-methyltransferase, which catalyzes the formation of N(1)-methyladenine at position 58 (m1A58) in initiator methionyl-tRNA. Also required for repression of GCN4 mRNA translation by the upstream open reading frames (uORFs) under conditions of amino acid sufficiency. The sequence is that of tRNA (adenine(58)-N(1))-methyltransferase non-catalytic subunit TRM6 (GCD10) from Saccharomyces cerevisiae (strain ATCC 204508 / S288c) (Baker's yeast).